Here is a 698-residue protein sequence, read N- to C-terminus: MEKYERIRVVGRGAFGIVHLCLRKADQKLVIIKQIPVEQMTKEERQAAQNECQVLKLLNHPNVIEYYENFLEDKALMIAMEYAPGGTLAEFIQKRCNSLLEEETILHFFVQILLALHHVHTHLILHRDLKTQNILLDKHRMVVKIGDFGISKILSSKSKAYTVVGTPCYISPELCEGKPYNQKSDIWALGCVLYELASLKRAFEAANLPALVLKIMSGTFAPISDRYSPELRQLVLSLLSLEPAQRPPLSHIMAQPLCIRALLNIHTDVGSVRMRRAEKCLTPGTPMAPGSTGSRATSARCRGVPRGPVRPAIPPPLSSVYAWGGGLSIPLRLPMPNTEVVQVAAGRTQKAGVTRSGRLILWEAPPLGTGGGTLLPGAVELPQPQFVSRFLEGQSGVTIKHVACGDLFTACLTDRGIIMTFGSGSNGCLGHGSLTDISQPTIVEALLGYEMVQVACGASHVLALSADGELFAWGRGDGGRLGLGTRESHNCPQQVPMVPGQEAQRVVCGIDCSMILTSPGRVLACGSNRFNKLGLDCLSLEEEPVPHQQVEEALSFTPLGSAPLDRETLLCVDLGTAHSAAVTASGACYTFGSNQHGQLGTSSRRVSRAPCRVQGLEGIKMVMVACGDAFTVAIGAEGEVYSWGKGARGRLGRRDEDAGLPRPVQLDETHPYTVTSVSCCHGNTLLAVRSVTDEPVPP.

Residues 4–258 (YERIRVVGRG…LSHIMAQPLC (255 aa)) form the Protein kinase domain. ATP is bound by residues 10–18 (VGRGAFGIV) and K33. The active-site Proton acceptor is the D128. T162 carries the post-translational modification Phosphothreonine; by autocatalysis. The disordered stretch occupies residues 281 to 307 (LTPGTPMAPGSTGSRATSARCRGVPRG). 5 RCC1 repeats span residues 415–466 (RGII…ALSA), 467–518 (DGEL…ILTS), 520–571 (GRVL…TLLC), 585–636 (SGAC…AIGA), and 638–689 (GEVY…LAVR).

Belongs to the protein kinase superfamily. NEK Ser/Thr protein kinase family. NIMA subfamily. Interacts with PKD2; may regulate PKD2 targeting to the cilium. Interacts with ANKS6. Component of a complex containing at least ANKS6, INVS, NEK8 and NPHP3. ANKS6 may organize complex assembly by linking INVS and NPHP3 to NEK8 and INVS may target it to the proximal ciliary axoneme. Interacts with ANKS3. Mg(2+) serves as cofactor.

The protein resides in the cytoplasm. Its subcellular location is the cytoskeleton. It localises to the cell projection. It is found in the cilium. The protein localises to the cilium axoneme. The protein resides in the microtubule organizing center. Its subcellular location is the centrosome. It carries out the reaction L-seryl-[protein] + ATP = O-phospho-L-seryl-[protein] + ADP + H(+). The enzyme catalyses L-threonyl-[protein] + ATP = O-phospho-L-threonyl-[protein] + ADP + H(+). Its function is as follows. Required for renal tubular integrity. May regulate local cytoskeletal structure in kidney tubule epithelial cells. May regulate ciliary biogenesis through targeting of proteins to the cilia. Plays a role in organogenesis and is involved in the regulation of the Hippo signaling pathway. The sequence is that of Serine/threonine-protein kinase Nek8 (Nek8) from Rattus norvegicus (Rat).